A 66-amino-acid chain; its full sequence is Cysteine proteinase inhibitor (66 aa).

Residues 18 to 22 (QVVAG) carry the Secondary area of contact motif.

The protein belongs to the cystatin family. Phytocystatin subfamily. In tubers of untreated plants. After ABA treatment or mechanical wounding is mostly accumulated in leaves, to a lesser extent in stems, but not in roots.

This is Cysteine proteinase inhibitor (CYS-PIN) from Solanum tuberosum (Potato).